The following is an 803-amino-acid chain: Translation initiation factor IF-2 (803 aa).

Disordered stretches follow at residues 93–123 (TKPV…LNEK) and 138–206 (EVKE…ASAK). The segment covering 111–121 (VPPTSDTTNLN) has biased composition (polar residues). Positions 138 to 155 (EVKEEAKKTPSEKKETPK) are enriched in basic and acidic residues. Residues 156–167 (KGPRKETRRSRK) are compositionally biased toward basic residues. A compositionally biased stretch (basic and acidic residues) spans 168 to 188 (PDKEDKWEREELHMTKLVEER). One can recognise a tr-type G domain in the interval 302–471 (PRAPVVTIMG…LLQAEVLELK (170 aa)). The segment at 311–318 (GHVDHGKT) is G1. Residue 311 to 318 (GHVDHGKT) participates in GTP binding. Positions 336-340 (GITQH) are G2. The tract at residues 357 to 360 (DTPG) is G3. Residues 357 to 361 (DTPGH) and 411 to 414 (NKID) contribute to the GTP site. The tract at residues 411-414 (NKID) is G4. The G5 stretch occupies residues 447–449 (SAK).

It belongs to the TRAFAC class translation factor GTPase superfamily. Classic translation factor GTPase family. IF-2 subfamily.

It localises to the cytoplasm. In terms of biological role, one of the essential components for the initiation of protein synthesis. Protects formylmethionyl-tRNA from spontaneous hydrolysis and promotes its binding to the 30S ribosomal subunits. Also involved in the hydrolysis of GTP during the formation of the 70S ribosomal complex. This is Translation initiation factor IF-2 from Coxiella burnetii (strain RSA 493 / Nine Mile phase I).